The sequence spans 324 residues: Glyoxylate/hydroxypyruvate reductase B (324 aa).

Active-site residues include Arg-237 and Glu-266. His-285 serves as the catalytic Proton donor.

Belongs to the D-isomer specific 2-hydroxyacid dehydrogenase family. GhrB subfamily. Homodimer.

Its subcellular location is the cytoplasm. It catalyses the reaction glycolate + NADP(+) = glyoxylate + NADPH + H(+). The enzyme catalyses (R)-glycerate + NAD(+) = 3-hydroxypyruvate + NADH + H(+). It carries out the reaction (R)-glycerate + NADP(+) = 3-hydroxypyruvate + NADPH + H(+). Functionally, catalyzes the NADPH-dependent reduction of glyoxylate and hydroxypyruvate into glycolate and glycerate, respectively. The polypeptide is Glyoxylate/hydroxypyruvate reductase B (Shigella flexneri).